A 235-amino-acid chain; its full sequence is Phosphoribosylaminoimidazole-succinocarboxamide synthase (235 aa).

It belongs to the SAICAR synthetase family.

It carries out the reaction 5-amino-1-(5-phospho-D-ribosyl)imidazole-4-carboxylate + L-aspartate + ATP = (2S)-2-[5-amino-1-(5-phospho-beta-D-ribosyl)imidazole-4-carboxamido]succinate + ADP + phosphate + 2 H(+). It functions in the pathway purine metabolism; IMP biosynthesis via de novo pathway; 5-amino-1-(5-phospho-D-ribosyl)imidazole-4-carboxamide from 5-amino-1-(5-phospho-D-ribosyl)imidazole-4-carboxylate: step 1/2. The sequence is that of Phosphoribosylaminoimidazole-succinocarboxamide synthase (purC) from Streptococcus pneumoniae serotype 4 (strain ATCC BAA-334 / TIGR4).